The following is a 92-amino-acid chain: YcgL domain-containing protein VC_1957 (92 aa).

Residues 1–84 (MLCSIYKSPK…PPENLLEQHK (84 aa)) enclose the YcgL domain. Positions 69-92 (FLQLPPPPENLLEQHKERKARQTP) are disordered.

This Vibrio cholerae serotype O1 (strain ATCC 39315 / El Tor Inaba N16961) protein is YcgL domain-containing protein VC_1957.